The primary structure comprises 259 residues: Imidazole glycerol phosphate synthase subunit HisF (259 aa).

Catalysis depends on residues aspartate 11 and aspartate 130.

Belongs to the HisA/HisF family. As to quaternary structure, heterodimer of HisH and HisF.

The protein localises to the cytoplasm. It catalyses the reaction 5-[(5-phospho-1-deoxy-D-ribulos-1-ylimino)methylamino]-1-(5-phospho-beta-D-ribosyl)imidazole-4-carboxamide + L-glutamine = D-erythro-1-(imidazol-4-yl)glycerol 3-phosphate + 5-amino-1-(5-phospho-beta-D-ribosyl)imidazole-4-carboxamide + L-glutamate + H(+). The protein operates within amino-acid biosynthesis; L-histidine biosynthesis; L-histidine from 5-phospho-alpha-D-ribose 1-diphosphate: step 5/9. In terms of biological role, IGPS catalyzes the conversion of PRFAR and glutamine to IGP, AICAR and glutamate. The HisF subunit catalyzes the cyclization activity that produces IGP and AICAR from PRFAR using the ammonia provided by the HisH subunit. This is Imidazole glycerol phosphate synthase subunit HisF from Polaromonas sp. (strain JS666 / ATCC BAA-500).